The following is a 360-amino-acid chain: sn-glycerol-3-phosphate import ATP-binding protein UgpC (360 aa).

Residues 4-235 (LSLKGVKKSY…PATTFVASFI (232 aa)) enclose the ABC transporter domain. Position 37 to 44 (37 to 44 (GPSGCGKS)) interacts with ATP.

Belongs to the ABC transporter superfamily. sn-glycerol-3-phosphate importer (TC 3.A.1.1.3) family. In terms of assembly, the complex is composed of two ATP-binding proteins (UgpC), two transmembrane proteins (UgpA and UgpE) and a solute-binding protein (UgpB).

It is found in the cell inner membrane. The enzyme catalyses sn-glycerol 3-phosphate(out) + ATP + H2O = sn-glycerol 3-phosphate(in) + ADP + phosphate + H(+). Its function is as follows. Part of the ABC transporter complex UgpBAEC involved in sn-glycerol-3-phosphate (G3P) import. Responsible for energy coupling to the transport system. This chain is sn-glycerol-3-phosphate import ATP-binding protein UgpC, found in Burkholderia mallei (strain ATCC 23344).